The chain runs to 158 residues: MAFSATVSQLSSLSTISSSLPISSRRLPHRSLPQFTVKAEAEKEKQSTQGKSDGEASPAATKTPKTLPKKPVYSMKKGQIVRVEKEKYLNSINYLSVGHPPFYKGLDYIYEDRGEVLDLRVFETGEYALVGWVGIPTAPAWLPTDMLIKCEKLVYERM.

The N-terminal 38 residues, 1–38 (MAFSATVSQLSSLSTISSSLPISSRRLPHRSLPQFTVK), are a transit peptide targeting the chloroplast. The tract at residues 33–70 (PQFTVKAEAEKEKQSTQGKSDGEASPAATKTPKTLPKK) is disordered. Low complexity predominate over residues 56–70 (ASPAATKTPKTLPKK).

The protein belongs to the NDH complex subunit O family. As to quaternary structure, part of the chloroplast NDH complex, composed of a mixture of chloroplast and nucleus encoded subunits. Component of the NDH subcomplex A, at least composed of ndhH, ndhI, ndhJ, ndhK, ndhL, ndhM, ndhN and ndhO.

Its subcellular location is the plastid. The protein resides in the chloroplast thylakoid membrane. The catalysed reaction is a plastoquinone + NADH + (n+1) H(+)(in) = a plastoquinol + NAD(+) + n H(+)(out). It catalyses the reaction a plastoquinone + NADPH + (n+1) H(+)(in) = a plastoquinol + NADP(+) + n H(+)(out). NDH shuttles electrons from NAD(P)H:plastoquinone, via FMN and iron-sulfur (Fe-S) centers, to quinones in the photosynthetic chain and possibly in a chloroplast respiratory chain. The immediate electron acceptor for the enzyme in this species is believed to be plastoquinone. Couples the redox reaction to proton translocation, and thus conserves the redox energy in a proton gradient. This is NAD(P)H-quinone oxidoreductase subunit O, chloroplastic from Arabidopsis thaliana (Mouse-ear cress).